An 87-amino-acid chain; its full sequence is MNSKVFAVLLLLALSTCVLSEKYCPTPRNTSCKKMNIRNNCCRDSDCTSNAFCCAEPCGNFCHKASDKPGGRRVDPNASCKTGYVYW.

The N-terminal stretch at 1–20 (MNSKVFAVLLLLALSTCVLS) is a signal peptide. A WAP domain is found at 21-66 (EKYCPTPRNTSCKKMNIRNNCCRDSDCTSNAFCCAEPCGNFCHKAS). 5 disulfide bridges follow: Cys-24/Cys-54, Cys-32/Cys-58, Cys-41/Cys-53, Cys-42/Cys-80, and Cys-47/Cys-62.

Belongs to the venom protein 11 family. 01 (wap-1) subfamily. In terms of processing, contains 5 disulfide bonds. As to expression, expressed by the venom gland.

It localises to the secreted. Its function is as follows. Has antibacterial activity. In Lycosa singoriensis (Wolf spider), this protein is U14-lycotoxin-Ls1b.